Here is a 98-residue protein sequence, read N- to C-terminus: Large ribosomal subunit protein bL28 (98 aa).

Belongs to the bacterial ribosomal protein bL28 family.

This is Large ribosomal subunit protein bL28 from Chelativorans sp. (strain BNC1).